The sequence spans 273 residues: Large ribosomal subunit protein uL2 (273 aa).

The disordered stretch occupies residues 221–263 (RGTAMNPVDHPHGGGEGRNFGKHPVTPWGVQTKGKKTRHNKRT). A compositionally biased stretch (basic residues) spans 253–263 (KGKKTRHNKRT).

Belongs to the universal ribosomal protein uL2 family. In terms of assembly, part of the 50S ribosomal subunit. Forms a bridge to the 30S subunit in the 70S ribosome.

In terms of biological role, one of the primary rRNA binding proteins. Required for association of the 30S and 50S subunits to form the 70S ribosome, for tRNA binding and peptide bond formation. It has been suggested to have peptidyltransferase activity; this is somewhat controversial. Makes several contacts with the 16S rRNA in the 70S ribosome. This Histophilus somni (strain 2336) (Haemophilus somnus) protein is Large ribosomal subunit protein uL2.